The following is a 214-amino-acid chain: Putative F-box protein At5g15670 (214 aa).

The F-box domain occupies 22–68; the sequence is RNKFDEIPHDLVIEILGRLPAKSVARFLTVSKLWATSIRSLDFIKSY.

The protein is Putative F-box protein At5g15670 of Arabidopsis thaliana (Mouse-ear cress).